We begin with the raw amino-acid sequence, 601 residues long: uncharacterized protein (601 aa).

Residues 127-364 (SSLFSSGSPP…PAFANDDTVH (238 aa)) form a disordered region. The span at 128-137 (SLFSSGSPPD) shows a compositional bias: polar residues. A compositionally biased stretch (low complexity) spans 141 to 154 (RNSTSNLSSVSTNS). Polar residues-rich tracts occupy residues 159-177 (TIGS…ASQR), 199-213 (ALSS…NVTP), and 232-250 (SATN…SPSQ). Phosphoserine occurs at positions 247 and 281. The segment covering 265-281 (SLSSSPSSEDSDLSLSS) has biased composition (low complexity). Basic and acidic residues-rich tracts occupy residues 286–296 (DEKKQPSKSEK) and 313–325 (GSKE…KEKA). Ser335 carries the phosphoserine modification. Over residues 338-356 (DTSTEYDSNSLRRSRSNPA) the composition is skewed to polar residues.

This is an uncharacterized protein from Schizosaccharomyces pombe (strain 972 / ATCC 24843) (Fission yeast).